We begin with the raw amino-acid sequence, 281 residues long: TIP41-like protein (281 aa).

The protein belongs to the TIP41 family.

The sequence is that of TIP41-like protein from Caenorhabditis elegans.